The chain runs to 389 residues: Nucleic acid dioxygenase ALKBH1 (389 aa).

The interaction with DNAJB6 stretch occupies residues 1 to 127 (MGKMAAAVAS…CLKLYSQKPN (127 aa)). The segment at 86 to 389 (SKWRAYGLEG…VKRKRLNPNS (304 aa)) is tRNA-binding. Substrate is bound by residues tryptophan 144 and 175–177 (YHY). One can recognise a Fe2OG dioxygenase domain in the interval 213-347 (QAEAGILNYY…RVNMTVRQVL (135 aa)). A 2-oxoglutarate-binding site is contributed by 220–222 (NYY). Positions 231, 233, and 287 each coordinate Fe cation. Aspartate 233 contacts substrate. 338–344 (RVNMTVR) provides a ligand contact to 2-oxoglutarate.

As to quaternary structure, monomer. Interacts with DNAJB6. Fe(2+) is required as a cofactor. In terms of tissue distribution, in adult organs, highly expressed in testis, eye, brain and kidney.

The protein resides in the nucleus. The enzyme catalyses an N(6)-methyl-2'-deoxyadenosine in DNA + 2-oxoglutarate + O2 = a 2'-deoxyadenosine in DNA + formaldehyde + succinate + CO2. The catalysed reaction is 2'-deoxyribonucleotide-(2'-deoxyribose 5'-phosphate)-2'-deoxyribonucleotide-DNA = a 3'-end 2'-deoxyribonucleotide-(2,3-dehydro-2,3-deoxyribose 5'-phosphate)-DNA + a 5'-end 5'-phospho-2'-deoxyribonucleoside-DNA + H(+). It carries out the reaction a methylated nucleobase within DNA + 2-oxoglutarate + O2 = a nucleobase within DNA + formaldehyde + succinate + CO2. It catalyses the reaction an N(1)-methyladenosine in tRNA + 2-oxoglutarate + O2 = an adenosine in tRNA + formaldehyde + succinate + CO2. The enzyme catalyses 5-methylcytidine(34) in mitochondrial tRNA(Met) + 2 2-oxoglutarate + 2 O2 = 5-formylcytidine(34) in mitochondrial tRNA(Met) + 2 succinate + 2 CO2 + H2O. The catalysed reaction is an N(3)-methylcytidine in mRNA + 2-oxoglutarate + O2 = a cytidine in mRNA + formaldehyde + succinate + CO2. It carries out the reaction N(1)-methyladenosine(58) in tRNA + 2-oxoglutarate + O2 = adenosine(58) in tRNA + formaldehyde + succinate + CO2. Functionally, dioxygenase that acts on nucleic acids, such as DNA and tRNA. Requires molecular oxygen, alpha-ketoglutarate and iron. A number of activities have been described for this dioxygenase, but recent results suggest that it mainly acts on tRNAs and mediates their demethylation or oxidation depending on the context and subcellular compartment. Mainly acts as a tRNA demethylase by removing N(1)-methyladenine from various tRNAs, with a preference for N(1)-methyladenine at position 58 (m1A58) present on a stem loop structure of tRNAs. Acts as a regulator of translation initiation and elongation in response to glucose deprivation: regulates both translation initiation, by mediating demethylation of tRNA(Met), and translation elongation, N(1)-methyladenine-containing tRNAs being preferentially recruited to polysomes to promote translation elongation. In mitochondrion, specifically interacts with mt-tRNA(Met) and mediates oxidation of mt-tRNA(Met) methylated at cytosine(34) to form 5-formylcytosine (f(5)c) at this position. mt-tRNA(Met) containing the f(5)c modification at the wobble position enables recognition of the AUA codon in addition to the AUG codon, expanding codon recognition in mitochondrial translation. Specifically demethylates DNA methylated on the 6th position of adenine (N(6)-methyladenosine) DNA. N(6)-methyladenosine (m6A) DNA is present at some L1 elements in embryonic stem cells and probably promotes their silencing. Demethylates mRNAs containing N(3)-methylcytidine modification. Also able to repair alkylated single-stranded DNA by oxidative demethylation, but with low activity. Also has DNA lyase activity and introduces double-stranded breaks at abasic sites: cleaves both single-stranded DNA and double-stranded DNA at abasic sites, with the greatest activity towards double-stranded DNA with two abasic sites. DNA lyase activity does not require alpha-ketoglutarate and iron and leads to the formation of an irreversible covalent protein-DNA adduct with the 5' DNA product. DNA lyase activity is not required during base excision repair and class switch recombination of the immunoglobulin heavy chain during B lymphocyte activation. May play a role in placental trophoblast lineage differentiation. This is Nucleic acid dioxygenase ALKBH1 from Mus musculus (Mouse).